The primary structure comprises 323 residues: tRNA U34 carboxymethyltransferase (323 aa).

Carboxy-S-adenosyl-L-methionine contacts are provided by residues K91, W105, K110, G130, 152–154 (DPS), 181–182 (IE), M196, Y200, and R315.

This sequence belongs to the class I-like SAM-binding methyltransferase superfamily. CmoB family. Homotetramer.

The catalysed reaction is carboxy-S-adenosyl-L-methionine + 5-hydroxyuridine(34) in tRNA = 5-carboxymethoxyuridine(34) in tRNA + S-adenosyl-L-homocysteine + H(+). Catalyzes carboxymethyl transfer from carboxy-S-adenosyl-L-methionine (Cx-SAM) to 5-hydroxyuridine (ho5U) to form 5-carboxymethoxyuridine (cmo5U) at position 34 in tRNAs. In Vibrio vulnificus (strain CMCP6), this protein is tRNA U34 carboxymethyltransferase.